Here is a 90-residue protein sequence, read N- to C-terminus: Small ribosomal subunit protein uS17 (90 aa).

The protein belongs to the universal ribosomal protein uS17 family. As to quaternary structure, part of the 30S ribosomal subunit.

Its function is as follows. One of the primary rRNA binding proteins, it binds specifically to the 5'-end of 16S ribosomal RNA. The sequence is that of Small ribosomal subunit protein uS17 from Gluconobacter oxydans (strain 621H) (Gluconobacter suboxydans).